Here is a 454-residue protein sequence, read N- to C-terminus: ESX-1 secretion-associated protein EspB (454 aa).

Disordered stretches follow at residues 17–40 (RADEVEAPMATPPTDVPQAPSGLT), 82–128 (GEVE…AGES), and 391–454 (AGQG…QDNK). Residues 391–422 (AGQGGGAAGRGMAGGGMGMPMGGAGQGQGGAK) are compositionally biased toward gly residues.

It belongs to the EspB family. Cleaved at close to the C-terminus during secretion.

The protein resides in the secreted. In Mycobacterium marinum (strain ATCC BAA-535 / M), this protein is ESX-1 secretion-associated protein EspB.